The sequence spans 430 residues: Tyrosine--tRNA ligase (430 aa).

Y32 is a binding site for L-tyrosine. The 'HIGH' region motif lies at 37-46 (PTADSLHIGH). 2 residues coordinate L-tyrosine: Y172 and Q176. The 'KMSKS' region signature appears at 232-236 (KFGKT). An ATP-binding site is contributed by K235. Positions 362-430 (ISLVDLLADA…KKSYYLIIVE (69 aa)) constitute an S4 RNA-binding domain.

It belongs to the class-I aminoacyl-tRNA synthetase family. TyrS type 1 subfamily. As to quaternary structure, homodimer.

Its subcellular location is the cytoplasm. The enzyme catalyses tRNA(Tyr) + L-tyrosine + ATP = L-tyrosyl-tRNA(Tyr) + AMP + diphosphate + H(+). Functionally, catalyzes the attachment of tyrosine to tRNA(Tyr) in a two-step reaction: tyrosine is first activated by ATP to form Tyr-AMP and then transferred to the acceptor end of tRNA(Tyr). The polypeptide is Tyrosine--tRNA ligase (Porphyromonas gingivalis (strain ATCC BAA-308 / W83)).